A 125-amino-acid polypeptide reads, in one-letter code: Classical arabinogalactan protein 27 (125 aa).

The N-terminal stretch at 1 to 21 is a signal peptide; the sequence is MASSILLTLITFIFLSSLSLS. Low complexity predominate over residues 20 to 36; the sequence is LSSPTTNTIPSSQTISP. The tract at residues 20 to 95 is disordered; the sequence is LSSPTTNTIP…ASPPASSLAS (76 aa). The segment covering 53–66 has biased composition (polar residues); the sequence is AVSSTQTIPSSSTL. The segment covering 77–95 has biased composition (low complexity); that stretch reads DPDPAFAPSASPPASSLAS. Ser-98 carries the GPI-anchor amidated serine lipid modification. Positions 99–125 are cleaved as a propeptide — removed in mature form; it reads QAPGVFIYFVFAAVYCFSLRLLAVSAI.

This sequence belongs to the classical AGP family. Post-translationally, O-glycosylated on the hydroxyproline residues.

The protein resides in the cell membrane. Proteoglycan that seems to be implicated in diverse developmental roles such as differentiation, cell-cell recognition, embryogenesis and programmed cell death. In Arabidopsis thaliana (Mouse-ear cress), this protein is Classical arabinogalactan protein 27 (AGP27).